The chain runs to 321 residues: Ras association domain-containing protein 4 (321 aa).

A disordered region spans residues 79-159; the sequence is HLPSTSWMPR…RPKCRAPGEA (81 aa). Polar residues predominate over residues 98–110; it reads SPQNGNITAQGPS. Residue S141 is modified to Phosphoserine. Positions 174–262 constitute a Ras-associating domain; the sequence is YNHKTSVFTP…ARIFLMEADL (89 aa). Residues 270–317 enclose the SARAH domain; it reads VAQYIKFEMPVLDSFVEKLKEEEEREIIKLTMKFQALRLTMLQRLEQL.

In terms of assembly, interacts directly with activated KRAS in a GTP-dependent manner. Widely expressed. Frequently down-regulated in tumor cell lines.

Potential tumor suppressor. May act as a KRAS effector protein. May promote apoptosis and cell cycle arrest. This is Ras association domain-containing protein 4 (RASSF4) from Homo sapiens (Human).